The following is a 128-amino-acid chain: Aspartate 1-decarboxylase (128 aa).

S25 functions as the Schiff-base intermediate with substrate; via pyruvic acid in the catalytic mechanism. The residue at position 25 (S25) is a Pyruvic acid (Ser). T57 is a binding site for substrate. Y58 serves as the catalytic Proton donor. 73-75 provides a ligand contact to substrate; the sequence is GSA.

Belongs to the PanD family. In terms of assembly, heterooctamer of four alpha and four beta subunits. Pyruvate is required as a cofactor. Post-translationally, is synthesized initially as an inactive proenzyme, which is activated by self-cleavage at a specific serine bond to produce a beta-subunit with a hydroxyl group at its C-terminus and an alpha-subunit with a pyruvoyl group at its N-terminus.

Its subcellular location is the cytoplasm. The catalysed reaction is L-aspartate + H(+) = beta-alanine + CO2. The protein operates within cofactor biosynthesis; (R)-pantothenate biosynthesis; beta-alanine from L-aspartate: step 1/1. Functionally, catalyzes the pyruvoyl-dependent decarboxylation of aspartate to produce beta-alanine. This is Aspartate 1-decarboxylase from Burkholderia multivorans (strain ATCC 17616 / 249).